Consider the following 238-residue polypeptide: MEEAKIPMLKLGPITFNLTLLAVCIVTIAIVFAFVFWASRQMKLKPEGKQTALEYLISFVDGIGEEHLDHNLQKSYSLLLFTIFLFVAVANNLGLFTKLETVNGYNLWTSPTANLAFDLALSLFITLMVHIEGVRRRGLVAHLKRLATPWPMTPMNLLEEFTNFLSLAIRLFGNIFAGEVVTGLIVQLANYRVYWWPIAFLVNMAWTAFSVFISCIQAFVFTKLTATYLGKKVNESEE.

5 helical membrane passes run Leu18–Ala38, Tyr76–Phe96, Asn114–Val134, Ser166–Val186, and Val193–Ile213.

It belongs to the ATPase A chain family. As to quaternary structure, F-type ATPases have 2 components, CF(1) - the catalytic core - and CF(0) - the membrane proton channel. CF(1) has five subunits: alpha(3), beta(3), gamma(1), delta(1), epsilon(1). CF(0) has three main subunits: a(1), b(2) and c(9-12). The alpha and beta chains form an alternating ring which encloses part of the gamma chain. CF(1) is attached to CF(0) by a central stalk formed by the gamma and epsilon chains, while a peripheral stalk is formed by the delta and b chains.

The protein resides in the cell membrane. Key component of the proton channel; it plays a direct role in the translocation of protons across the membrane. The chain is ATP synthase subunit a from Streptococcus pyogenes serotype M1.